The chain runs to 506 residues: Glycine--tRNA ligase (506 aa).

Substrate-binding residues include R99 and E189. ATP contacts are provided by residues 221-223, 231-236, 305-306, and 364-367; these read RNE, FRVREF, EL, and GVDR. 236-240 contacts substrate; sequence FEQME. 360–364 lines the substrate pocket; the sequence is EPSAG.

It belongs to the class-II aminoacyl-tRNA synthetase family. Homodimer.

It localises to the cytoplasm. It carries out the reaction tRNA(Gly) + glycine + ATP = glycyl-tRNA(Gly) + AMP + diphosphate. Its function is as follows. Catalyzes the attachment of glycine to tRNA(Gly). The polypeptide is Glycine--tRNA ligase (Thermus thermophilus (strain ATCC BAA-163 / DSM 7039 / HB27)).